The sequence spans 186 residues: MFDIGFSELILLMVLGLVVLGPKRLPIAIRTVMDWVKTIRGLAANVQNELKQELKLQELQDSIKKAESLNLQALSPELSKTVEELKAQADKMKAELEDKAAQAGTTVEDQIKEIKSAAENAEKSQNAISVEEAAETLSEAERTPTDLTALETHEKVELNTHLSSYYPPDDIEIAPASKSQSSKTKS.

The chain crosses the membrane as a helical span at residues Met1–Gly21. Residues Asn120–Ser186 are disordered. A compositionally biased stretch (polar residues) spans Ser177–Ser186.

Belongs to the TatB family. As to quaternary structure, the Tat system comprises two distinct complexes: a TatABC complex, containing multiple copies of TatA, TatB and TatC subunits, and a separate TatA complex, containing only TatA subunits. Substrates initially bind to the TatABC complex, which probably triggers association of the separate TatA complex to form the active translocon.

The protein resides in the cell inner membrane. In terms of biological role, part of the twin-arginine translocation (Tat) system that transports large folded proteins containing a characteristic twin-arginine motif in their signal peptide across membranes. Together with TatC, TatB is part of a receptor directly interacting with Tat signal peptides. TatB may form an oligomeric binding site that transiently accommodates folded Tat precursor proteins before their translocation. This Haemophilus influenzae (strain ATCC 51907 / DSM 11121 / KW20 / Rd) protein is Sec-independent protein translocase protein TatB.